We begin with the raw amino-acid sequence, 34 residues long: Ornithine carbamoyltransferase, catabolic (34 aa).

The protein belongs to the aspartate/ornithine carbamoyltransferase superfamily. OTCase family. Probably nonameric or dodecameric.

Its subcellular location is the cytoplasm. It carries out the reaction carbamoyl phosphate + L-ornithine = L-citrulline + phosphate + H(+). It functions in the pathway amino-acid degradation; L-arginine degradation via ADI pathway; carbamoyl phosphate from L-arginine: step 2/2. The chain is Ornithine carbamoyltransferase, catabolic (arcB) from Pseudomonas putida (Arthrobacter siderocapsulatus).